The primary structure comprises 236 residues: Small ribosomal subunit protein uS2c (236 aa).

The protein belongs to the universal ribosomal protein uS2 family.

The protein localises to the plastid. The protein resides in the chloroplast. This chain is Small ribosomal subunit protein uS2c (rps2), found in Manihot esculenta (Cassava).